The sequence spans 291 residues: MFSGSIPALVTPFRDGAFDAPTFARLVDWQVKEGTSALVPCGTTGESPTLSFDEHYRVIDCCIEAAAGRVPVIAGCGSNDTATAIRHMRHAQASGADAALIVAPYYNRPSQEGMIAHFKALADASDLPIVVYNVPGRTVADISAETMCKLAEIPTVVAVKDASGDLARVTVHRKGARHGFCQLSGNDELWLPHAVMGGAGCISVTANVAPRLCADFAAACAAGEWTRALALHDRLFDLHKAMFSDTSPGPVKYALSRVHDWFSPEVRLPIIPASGASRAVVDAALASAGVI.

T44 is a pyruvate binding site. Y132 serves as the catalytic Proton donor/acceptor. K160 functions as the Schiff-base intermediate with substrate in the catalytic mechanism. I202 serves as a coordination point for pyruvate.

Belongs to the DapA family. Homotetramer; dimer of dimers.

The protein localises to the cytoplasm. It carries out the reaction L-aspartate 4-semialdehyde + pyruvate = (2S,4S)-4-hydroxy-2,3,4,5-tetrahydrodipicolinate + H2O + H(+). It participates in amino-acid biosynthesis; L-lysine biosynthesis via DAP pathway; (S)-tetrahydrodipicolinate from L-aspartate: step 3/4. Catalyzes the condensation of (S)-aspartate-beta-semialdehyde [(S)-ASA] and pyruvate to 4-hydroxy-tetrahydrodipicolinate (HTPA). This Sphingopyxis alaskensis (strain DSM 13593 / LMG 18877 / RB2256) (Sphingomonas alaskensis) protein is 4-hydroxy-tetrahydrodipicolinate synthase.